The sequence spans 289 residues: UPF0276 protein BPP1075 (289 aa).

Belongs to the UPF0276 family.

The polypeptide is UPF0276 protein BPP1075 (Bordetella parapertussis (strain 12822 / ATCC BAA-587 / NCTC 13253)).